Reading from the N-terminus, the 653-residue chain is Protein CBFA2T3 (653 aa).

Residues 1–10 (MPASRLRDRA) are compositionally biased toward basic and acidic residues. The interval 1–109 (MPASRLRDRA…HTHREDGPAT (109 aa)) is disordered. Residues 1–127 (MPASRLRDRA…CLKWSMVCLL (127 aa)) form a required for nucleolar targeting (in isoform 1) region. Residues 1-430 (MPASRLRDRA…RRCQEADREE (430 aa)) form a mediates interaction with PDE7A (in isoform 2) region. Residues 1–435 (MPASRLRDRA…ADREELNHWA (435 aa)) are mediates localization to the nucleus. A compositionally biased stretch (low complexity) spans 11 to 23 (ASSASGSTCGSMS). Residues 75 to 86 (STPPSMPPPPPA) show a composition bias toward pro residues. Residues 145–242 (PNGFSNGPAT…IPFLKANLPL (98 aa)) are interaction with ZBTB33. In terms of domain architecture, TAFH spans 171-266 (ARQLSKLKRF…TPAQYLAQHE (96 aa)). An interaction with HIF1A region spans residues 176-268 (KLKRFLTTLQ…AQYLAQHEQL (93 aa)). The interval 284–342 (LLEVNENGKRRTPDRTKENGSDRDPLHPEHLSKRPCTLNPAQRYSPSNGPPQPTPPPHY) is disordered. Basic and acidic residues predominate over residues 289-315 (ENGKRRTPDRTKENGSDRDPLHPEHLS). Pro residues predominate over residues 331–341 (NGPPQPTPPPH). The nervy homology region 2 (NHR2); essential for down-regulation of PFKFB3, PFKFB4 and PDK1 expression stretch occupies residues 394–412 (EEWKHLNNLLNCIMDMVEK). Basic and acidic residues predominate over residues 434-446 (WARRYSDAEDTKK). The disordered stretch occupies residues 434–472 (WARRYSDAEDTKKGPAPAAARPRSSSAGPEGPQLDVPRE). The span at 447 to 462 (GPAPAAARPRSSSAGP) shows a compositional bias: low complexity. Phosphoserine is present on residues serine 457 and serine 459. At threonine 479 the chain carries Phosphothreonine. The segment at 485 to 506 (DIWRKAEEAVNEVKRQAMSELQ) is mediates interaction with PRKAR2A. The segment at 485 to 533 (DIWRKAEEAVNEVKRQAMSELQKAVSDAERKAHELITTERAKMERALAE) is nervy homology region 3 (NHR3); essential for down-regulation of PFKFB3, PFKFB4 and PDK1 expression. A coiled-coil region spans residues 488–543 (RKAEEAVNEVKRQAMSELQKAVSDAERKAHELITTERAKMERALAEAKRQASEDAL). Residues cysteine 556, cysteine 559, cysteine 567, cysteine 570, cysteine 576, cysteine 580, histidine 588, and cysteine 592 each coordinate Zn(2+). The MYND-type zinc finger occupies 556-592 (CWNCGRKASETCSGCNAARYCGSFCQHRDWEKHHHVC). Residues 603-653 (VADPVPGPPEAAHSLGPSLPVGAASPSEAGSAGPSRPGSPSPPGPLDTVPR) are disordered. Low complexity predominate over residues 622–638 (PVGAASPSEAGSAGPSR). Phosphoserine occurs at positions 637 and 641. The residue at position 650 (threonine 650) is a Phosphothreonine.

Belongs to the CBFA2T family. As to quaternary structure, homooligomer. Homotetramerization is mediated by nervy homology region 2 (NRH2). Can interact with RUNX1T1 and CBFA2T2; heterotetramerization between members of the CBFA2T family is proposed. Component of a TAL-1 complex composed at least of CBFA2T3, LDB1, TAL1 and TCF3. Interacts with ERBB4, HDAC1, HDAC2, HDAC3, HDAC6, HDAC8, NCOR1, NCOR2, and ZNF652. According to PubMed:12242670, may not interact with HDAC6. Interacts with PLXNA1, PLXNA3 and PRKAR1A. Isoform 2 interacts with PRKAR2A, PDE7A and probably PDE4A. Interacts with ZBTB4, ZBTB38 and ZBTB33. Interacts with HIF1A and EGLN1. Interacts with the AML1-MTG8/ETO fusion protein. As to expression, widely expressed with higher expression in heart, pancreas, skeletal muscle, spleen, thymus and peripheral blood leukocytes. Expressed in hematopoietic cells (at protein level).

Its subcellular location is the nucleus. It localises to the nucleolus. It is found in the nucleoplasm. The protein localises to the golgi apparatus membrane. Transcriptional corepressor which facilitates transcriptional repression via its association with DNA-binding transcription factors and recruitment of other corepressors and histone-modifying enzymes. Can repress the expression of MMP7 in a ZBTB33-dependent manner. Reduces the protein levels and stability of the transcriptinal regulator HIF1A; interacts with EGLN1 and promotes the HIF1A prolyl hydroxylation-dependent ubiquitination and proteasomal degradation pathway. Contributes to inhibition of glycolysis and stimulation of mitochondrial respiration by down-regulating the expression of glycolytic genes including PFKFB3, PFKFB4, PDK1, PFKP, LDHA and HK1 which are direct targets of HIF1A. Regulates the proliferation and the differentiation of erythroid progenitors by repressing the expression of TAL1 target genes. Plays a role in granulocyte differentiation. Its function is as follows. Isoform 2 functions as an A-kinase-anchoring protein. The protein is Protein CBFA2T3 (CBFA2T3) of Homo sapiens (Human).